A 256-amino-acid chain; its full sequence is LexA repressor (256 aa).

The interval 1–31 (MTSQGRGTRRGGTRGNVRAFPEGPTDAGLTP) is disordered. The segment at residues 53 to 73 (VREIGEAVGLTSTSSVAHQLK) is a DNA-binding region (H-T-H motif). Active-site for autocatalytic cleavage activity residues include S180 and K217.

Belongs to the peptidase S24 family. In terms of assembly, homodimer.

The catalysed reaction is Hydrolysis of Ala-|-Gly bond in repressor LexA.. Functionally, represses a number of genes involved in the response to DNA damage (SOS response), including recA and lexA. In the presence of single-stranded DNA, RecA interacts with LexA causing an autocatalytic cleavage which disrupts the DNA-binding part of LexA, leading to derepression of the SOS regulon and eventually DNA repair. This chain is LexA repressor, found in Frankia casuarinae (strain DSM 45818 / CECT 9043 / HFP020203 / CcI3).